The chain runs to 103 residues: UPF0145 protein PTH_2690 (103 aa).

Belongs to the UPF0145 family.

This chain is UPF0145 protein PTH_2690, found in Pelotomaculum thermopropionicum (strain DSM 13744 / JCM 10971 / SI).